Here is a 94-residue protein sequence, read N- to C-terminus: MANRGGCVTVAAEEMDELRRRNIELSREVAEMKTEMIKLWQRTVVAEEAEEQLCSQLAELEVESLEQARDYHDRMLFLMDQISRLSSSSVVSSS.

Positions 8-35 (VTVAAEEMDELRRRNIELSREVAEMKTE) form a coiled coil.

The protein is Protein RESPONSE TO LOW SULFUR 1 of Arabidopsis thaliana (Mouse-ear cress).